Here is a 290-residue protein sequence, read N- to C-terminus: Elongation factor Ts (290 aa).

The involved in Mg(2+) ion dislocation from EF-Tu stretch occupies residues 81–84 (TDFV).

It belongs to the EF-Ts family.

It localises to the cytoplasm. Associates with the EF-Tu.GDP complex and induces the exchange of GDP to GTP. It remains bound to the aminoacyl-tRNA.EF-Tu.GTP complex up to the GTP hydrolysis stage on the ribosome. This is Elongation factor Ts from Saccharophagus degradans (strain 2-40 / ATCC 43961 / DSM 17024).